The sequence spans 249 residues: Triosephosphate isomerase (249 aa).

Residues Asn12 and Lys14 each contribute to the substrate site. Lys14 is modified (N6-acetyllysine). Asn16 is modified (deamidated asparagine). The residue at position 68 (Tyr68) is a 3'-nitrotyrosine. The residue at position 72 (Asn72) is a Deamidated asparagine. Ser80 carries the phosphoserine modification. The Electrophile role is filled by His96. Position 106 is a phosphoserine (Ser106). Residue Lys142 forms a Glycyl lysine isopeptide (Lys-Gly) (interchain with G-Cter in SUMO1) linkage. Lys149 is modified (N6-succinyllysine). Lys156 carries the N6-acetyllysine; alternate modification. Residue Lys156 is modified to N6-succinyllysine; alternate. Residue Ser159 is modified to Phosphoserine. Catalysis depends on Glu166, which acts as the Proton acceptor. At Thr173 the chain carries Phosphothreonine. Lys194 is modified (N6-acetyllysine; alternate). Lys194 bears the N6-succinyllysine; alternate mark. Position 194 is an N6-methyllysine; alternate (Lys194). Ser198 bears the Phosphoserine mark. Tyr209 is modified (3'-nitrotyrosine). Ser212 carries the phosphoserine modification. Thr214 is modified (phosphothreonine). Ser223 bears the Phosphoserine mark. Lys238 is subject to N6-acetyllysine.

Belongs to the triosephosphate isomerase family. As to quaternary structure, homodimer. Asn-16 and Asn-72 undergo deamidation which gives rise to four extra negative charges. These are expected to decrease subunit-subunit interactions and so expose the hydrophobic interface to the aqueous environment.

It localises to the cytoplasm. It carries out the reaction D-glyceraldehyde 3-phosphate = dihydroxyacetone phosphate. The enzyme catalyses dihydroxyacetone phosphate = methylglyoxal + phosphate. It functions in the pathway carbohydrate degradation; glycolysis; D-glyceraldehyde 3-phosphate from glycerone phosphate: step 1/1. It participates in carbohydrate biosynthesis; gluconeogenesis. Triosephosphate isomerase is an extremely efficient metabolic enzyme that catalyzes the interconversion between dihydroxyacetone phosphate (DHAP) and D-glyceraldehyde-3-phosphate (G3P) in glycolysis and gluconeogenesis. Its function is as follows. It is also responsible for the non-negligible production of methylglyoxal a reactive cytotoxic side-product that modifies and can alter proteins, DNA and lipids. The chain is Triosephosphate isomerase (TPI1) from Oryctolagus cuniculus (Rabbit).